A 224-amino-acid polypeptide reads, in one-letter code: Germin-like protein 1-2 (224 aa).

Positions Met-1–Ala-29 are cleaved as a signal peptide. Cys-38 and Cys-53 form a disulfide bridge. One can recognise a Cupin type-1 domain in the interval Asp-67–Gly-215. N-linked (GlcNAc...) asparagine glycosylation is present at Asn-82. Mn(2+) contacts are provided by His-115, His-117, Glu-122, and His-161. The N-linked (GlcNAc...) asparagine glycan is linked to Asn-170.

Belongs to the germin family. In terms of assembly, oligomer (believed to be a pentamer but probably hexamer).

It localises to the secreted. It is found in the extracellular space. The protein localises to the apoplast. Functionally, may play a role in plant defense. Probably has no oxalate oxidase activity even if the active site is conserved. This chain is Germin-like protein 1-2, found in Oryza sativa subsp. japonica (Rice).